Consider the following 283-residue polypeptide: Phosphatidylglycerol--prolipoprotein diacylglyceryl transferase (283 aa).

Helical transmembrane passes span 17 to 37, 56 to 76, 92 to 112, and 117 to 137; these read LAVR…TFLG, FLTW…VLFY, WEGG…IWLF, and GIGF…GLAS. R139 serves as a coordination point for a 1,2-diacyl-sn-glycero-3-phospho-(1'-sn-glycerol). Helical transmembrane passes span 194-214, 222-242, and 255-275; these read PSQL…VWLF, GQVA…AEFA, and GLSM…VGFV.

Belongs to the Lgt family.

Its subcellular location is the cell inner membrane. The enzyme catalyses L-cysteinyl-[prolipoprotein] + a 1,2-diacyl-sn-glycero-3-phospho-(1'-sn-glycerol) = an S-1,2-diacyl-sn-glyceryl-L-cysteinyl-[prolipoprotein] + sn-glycerol 1-phosphate + H(+). It participates in protein modification; lipoprotein biosynthesis (diacylglyceryl transfer). Its function is as follows. Catalyzes the transfer of the diacylglyceryl group from phosphatidylglycerol to the sulfhydryl group of the N-terminal cysteine of a prolipoprotein, the first step in the formation of mature lipoproteins. The protein is Phosphatidylglycerol--prolipoprotein diacylglyceryl transferase of Neisseria meningitidis serogroup A / serotype 4A (strain DSM 15465 / Z2491).